A 248-amino-acid chain; its full sequence is Phosphatidylglycerol--prolipoprotein diacylglyceryl transferase (248 aa).

3 helical membrane passes run 6–26, 48–68, and 84–104; these read FSIF…GVIL, ILVW…VIFE, and GGGL…YVIC. R130 provides a ligand contact to a 1,2-diacyl-sn-glycero-3-phospho-(1'-sn-glycerol). A run of 2 helical transmembrane segments spans residues 187–207 and 214–234; these read GQIT…VEGL and IGAL…GVIL.

The protein belongs to the Lgt family.

It is found in the cell membrane. It catalyses the reaction L-cysteinyl-[prolipoprotein] + a 1,2-diacyl-sn-glycero-3-phospho-(1'-sn-glycerol) = an S-1,2-diacyl-sn-glyceryl-L-cysteinyl-[prolipoprotein] + sn-glycerol 1-phosphate + H(+). The protein operates within protein modification; lipoprotein biosynthesis (diacylglyceryl transfer). Functionally, catalyzes the transfer of the diacylglyceryl group from phosphatidylglycerol to the sulfhydryl group of the N-terminal cysteine of a prolipoprotein, the first step in the formation of mature lipoproteins. The sequence is that of Phosphatidylglycerol--prolipoprotein diacylglyceryl transferase from Finegoldia magna (strain ATCC 29328 / DSM 20472 / WAL 2508) (Peptostreptococcus magnus).